The chain runs to 105 residues: Met repressor (105 aa).

Belongs to the MetJ family. As to quaternary structure, homodimer.

It is found in the cytoplasm. This regulatory protein, when combined with SAM (S-adenosylmethionine) represses the expression of the methionine regulon and of enzymes involved in SAM synthesis. In Actinobacillus pleuropneumoniae serotype 7 (strain AP76), this protein is Met repressor.